Reading from the N-terminus, the 430-residue chain is 3-phosphoshikimate 1-carboxyvinyltransferase (430 aa).

3 residues coordinate 3-phosphoshikimate: K23, S24, and R28. K23 provides a ligand contact to phosphoenolpyruvate. The phosphoenolpyruvate site is built by G95 and R123. Positions 169, 171, 315, and 342 each coordinate 3-phosphoshikimate. Position 171 (Q171) interacts with phosphoenolpyruvate. The Proton acceptor role is filled by D315. R346 and R388 together coordinate phosphoenolpyruvate.

Belongs to the EPSP synthase family. In terms of assembly, monomer.

It is found in the cytoplasm. It carries out the reaction 3-phosphoshikimate + phosphoenolpyruvate = 5-O-(1-carboxyvinyl)-3-phosphoshikimate + phosphate. The protein operates within metabolic intermediate biosynthesis; chorismate biosynthesis; chorismate from D-erythrose 4-phosphate and phosphoenolpyruvate: step 6/7. Catalyzes the transfer of the enolpyruvyl moiety of phosphoenolpyruvate (PEP) to the 5-hydroxyl of shikimate-3-phosphate (S3P) to produce enolpyruvyl shikimate-3-phosphate and inorganic phosphate. The sequence is that of 3-phosphoshikimate 1-carboxyvinyltransferase from Streptococcus pyogenes serotype M6 (strain ATCC BAA-946 / MGAS10394).